The sequence spans 1733 residues: Gag-Pol polyprotein (1733 aa).

A lipid anchor (N-myristoyl glycine; by host) is attached at G2. A PTAP/PSAP motif motif is present at residues 109 to 112 (PTAP). The LYPX(n)L motif motif lies at 128–132 (LYPAL). Disordered regions lie at residues 139–218 (KPPK…LRMG), 449–497 (KEER…RPQL), and 511–549 (WAKDCPKKPRGPRGPRPQTSLLTLGDXGGQGQEPPPEPR). A PPXY motif motif is present at residues 161–164 (PPPY). Residue S190 is modified to Phosphoserine; by host. A coiled-coil region spans residues 436-476 (EEREERIRREIEEKEERRRAEDEQRERERDRRRHREMSKLL). Composition is skewed to basic and acidic residues over residues 449–464 (KEERRRAEDEQRERER) and 484–497 (RQDRQGGERRRPQL). The CCHC-type zinc finger occupies 500-517 (DQCAYCKEKGHWAKDCPK). Low complexity predominate over residues 526-535 (RPQTSLLTLG). The 71-residue stretch at 559–629 (VTFLVDTGAQ…CPYPLLGRDL (71 aa)) folds into the Peptidase A2 domain. D564 acts as the Protease; shared with dimeric partner in catalysis. Positions 721, 771, 773, and 787 each coordinate RNA. Positions 739 to 930 (LDQGILVPCQ…KQVKYLGYLL (192 aa)) constitute a Reverse transcriptase domain. D807 is a binding site for Mg(2+). RNA-binding residues include N851 and P853. Positions 881 and 882 each coordinate Mg(2+). DNA is bound by residues R941, R955, R958, and F966. Residues K1054 and K1055 each coordinate RNA. W1063 lines the DNA pocket. K1082 contributes to the RNA binding site. R1113 contacts DNA. The 147-residue stretch at 1172-1318 (PDADYTWYTD…ADQAAREAAM (147 aa)) folds into the RNase H type-1 domain. Residue D1181 participates in Mg(2+) binding. Residues S1184 and L1186 each contribute to the RNA site. The DNA site is built by Q1187, S1214, and Q1216. Residues E1219 and D1240 each coordinate Mg(2+). Positions 1242 and 1266 each coordinate RNA. The Mg(2+) site is built by D1310, D1453, and D1512. The Integrase catalytic domain occupies 1442 to 1600 (RGHRPGTHWE…TPYEILYGAP (159 aa)).

Homohexamer, that further associates as homomultimer. The virus core is composed of a lattice formed from hexagonal rings, each containing six capsid monomers. The protease is a homodimer, whose active site consists of two apposed aspartic acid residues. The reverse transcriptase is a monomer. In terms of assembly, interacts (via PPXY motif) with host NEDD4. Interacts (via PSAP motif) with host TSG101. Interacts (via LYPX(n)L motif) with host PDCD6IP. As to quaternary structure, the reverse transcriptase is a monomer (Potential). Interacts (via RNase domains) with host release factor ETF1; this interaction is essential for translational readthrough of amber codon between viral gag and pol genes, as well as for viral replication. Homodimer. Requires Mg(2+) as cofactor. Mn(2+) serves as cofactor. In terms of processing, specific enzymatic cleavages by the viral protease yield mature proteins. The protease is released by autocatalytic cleavage. The polyprotein is cleaved during and after budding, this process is termed maturation. Post-translationally, sumoylated; which is required for virus replication. Phosphorylated on serine residues.

It localises to the host cell membrane. It is found in the virion. The catalysed reaction is DNA(n) + a 2'-deoxyribonucleoside 5'-triphosphate = DNA(n+1) + diphosphate. It catalyses the reaction Endonucleolytic cleavage to 5'-phosphomonoester.. Plays a role in budding and is processed by the viral protease during virion maturation outside the cell. During budding, it recruits, in a PPXY-dependent or independent manner, Nedd4-like ubiquitin ligases that conjugate ubiquitin molecules to Gag, or to Gag binding host factors. Interaction with HECT ubiquitin ligases probably link the viral protein to the host ESCRT pathway and facilitate release. Its function is as follows. Targets Gag and gag-pol polyproteins to the plasma membrane via a multipartite membrane binding signal, that includes its myristoylated N-terminus. Also mediates nuclear localization of the pre-integration complex. Functionally, forms the spherical core of the virion that encapsulates the genomic RNA-nucleocapsid complex. In terms of biological role, involved in the packaging and encapsidation of two copies of the genome. Binds with high affinity to conserved UCUG elements within the packaging signal, located near the 5'-end of the genome. This binding is dependent on genome dimerization. Acts as a nucleic acid chaperone which is involved in rearrangement of nucleic acid secondary structures during gRNA retrotranscription. The aspartyl protease mediates proteolytic cleavages of Gag and Gag-Pol polyproteins during or shortly after the release of the virion from the plasma membrane. Cleavages take place as an ordered, step-wise cascade to yield mature proteins. This process is called maturation. Displays maximal activity during the budding process just prior to particle release from the cell. Its function is as follows. RT is a multifunctional enzyme that converts the viral dimeric RNA genome into dsDNA in the cytoplasm, shortly after virus entry into the cell. This enzyme displays a DNA polymerase activity that can copy either DNA or RNA templates, and a ribonuclease H (RNase H) activity that cleaves the RNA strand of RNA-DNA heteroduplexes in a partially processive 3' to 5' endonucleasic mode. Conversion of viral genomic RNA into dsDNA requires many steps. A tRNA binds to the primer-binding site (PBS) situated at the 5' end of the viral RNA. RT uses the 3' end of the tRNA primer to perform a short round of RNA-dependent minus-strand DNA synthesis. The reading proceeds through the U5 region and ends after the repeated (R) region which is present at both ends of viral RNA. The portion of the RNA-DNA heteroduplex is digested by the RNase H, resulting in a ssDNA product attached to the tRNA primer. This ssDNA/tRNA hybridizes with the identical R region situated at the 3' end of viral RNA. This template exchange, known as minus-strand DNA strong stop transfer, can be either intra- or intermolecular. RT uses the 3' end of this newly synthesized short ssDNA to perform the RNA-dependent minus-strand DNA synthesis of the whole template. RNase H digests the RNA template except for a polypurine tract (PPT) situated at the 5' end of the genome. It is not clear if both polymerase and RNase H activities are simultaneous. RNase H probably can proceed both in a polymerase-dependent (RNA cut into small fragments by the same RT performing DNA synthesis) and a polymerase-independent mode (cleavage of remaining RNA fragments by free RTs). Secondly, RT performs DNA-directed plus-strand DNA synthesis using the PPT that has not been removed by RNase H as primers. PPT and tRNA primers are then removed by RNase H. The 3' and 5' ssDNA PBS regions hybridize to form a circular dsDNA intermediate. Strand displacement synthesis by RT to the PBS and PPT ends produces a blunt ended, linear dsDNA copy of the viral genome that includes long terminal repeats (LTRs) at both ends. Functionally, catalyzes viral DNA integration into the host chromosome, by performing a series of DNA cutting and joining reactions. This enzyme activity takes place after virion entry into a cell and reverse transcription of the RNA genome in dsDNA. The first step in the integration process is 3' processing. This step requires a complex comprising the viral genome, matrix protein and integrase. This complex is called the pre-integration complex (PIC). The integrase protein removes 2 nucleotides from each 3' end of the viral DNA, leaving recessed CA OH's at the 3' ends. In the second step that requires cell division, the PIC enters cell nucleus. In the third step, termed strand transfer, the integrase protein joins the previously processed 3' ends to the 5' ends of strands of target cellular DNA at the site of integration. The last step is viral DNA integration into host chromosome. The sequence is that of Gag-Pol polyprotein (gag-pol) from Homo sapiens (Human).